The primary structure comprises 454 residues: Serine/arginine (SR)-type shuttling mRNA binding protein HRB1 (454 aa).

The tract at residues 1–141 (MSDQERGSEN…SSGARGDYGP (141 aa)) is disordered. Residues 14–24 (SRSRSRSPVRR) are compositionally biased toward basic residues. Composition is skewed to basic and acidic residues over residues 25-38 (RMSD…DNHL) and 50-113 (KFAD…DYPR). Residue Arg-127 is modified to Omega-N-methylarginine. RRM domains lie at 161–237 (NSIF…QDNP) and 261–338 (HEVI…SKES). Ser-338, Ser-343, and Ser-355 each carry phosphoserine. An RRM 3 domain is found at 376–453 (RLIYCSNLPF…CDLDISYAKR (78 aa)).

Post-translationally, methylated by HMT1.

The protein localises to the cytoplasm. Its subcellular location is the nucleus. The protein resides in the P-body. It localises to the stress granule. Functionally, binds to intron-containing transcripts and is involved in quality control for the export of spliced mRNAs from the nucleus. Binds to pre-mRNAs until splicing is completed or until faulty mRNAs are degraded. On correctly spliced mRNAs, GBP2 and HRB1 recruit MEX67 to allow nuclear export. On faulty mRNAs, GBP2 and HRB1 associate with the TRAMP complex that guides those pre-mRNAs to the exosome for degradation. The sequence is that of Serine/arginine (SR)-type shuttling mRNA binding protein HRB1 from Saccharomyces cerevisiae (strain ATCC 204508 / S288c) (Baker's yeast).